The following is a 434-amino-acid chain: Protein POLLENLESS 3 (434 aa).

Residues 13–47 (VYYTPPPARTSDHVAAMPMTERRRPPYSCSSSSER) form a disordered region. The Nuclear localization signal 1 signature appears at 34-37 (RRRP). TPR repeat units lie at residues 95-131 (DSAL…ESQD), 133-164 (IDNL…LEQG), 191-224 (ARIL…ERDK), and 241-274 (PEAK…AVEM). Residues 142 to 166 (KKSGRIEEEAVLLEHKLQTLEQGMG) adopt a coiled-coil conformation. Residues 309-329 (TANKNYSDVSSSPASVRPNSA) form a disordered region. The segment covering 310 to 326 (ANKNYSDVSSSPASVRP) has biased composition (polar residues). Positions 377–380 (KRKK) match the Nuclear localization signal 2 motif. Positions 393–408 (VKDTADGPKSESKKSW) are enriched in basic and acidic residues. A disordered region spans residues 393–434 (VKDTADGPKSESKKSWADIAEEEEAEEEEEERLQGELKTAEM). Residues 408 to 434 (WADIAEEEEAEEEEEERLQGELKTAEM) are a coiled coil. The span at 411-423 (IAEEEEAEEEEEE) shows a compositional bias: acidic residues. Residues 424–434 (RLQGELKTAEM) show a composition bias toward basic and acidic residues.

It belongs to the MS5 protein family. In terms of tissue distribution, expressed at low levels mostly in floral organs during meiosis. Also barely detectable in leaves, stems and roots.

The protein localises to the nucleus. Its function is as follows. Essential for male fertility, especially for microspore and pollen grain production. Involved in the regulation of cell division after male meiosis I and II to facilitate exit from meiosis and transition to G1. The sequence is that of Protein POLLENLESS 3 from Arabidopsis thaliana (Mouse-ear cress).